The following is a 356-amino-acid chain: 3-dehydroquinate synthase (356 aa).

Residues 106-110 (GVVGD), 130-131 (TS), K143, K152, and 170-173 (FLKT) contribute to the NAD(+) site. Zn(2+) contacts are provided by E185, H246, and H263.

This sequence belongs to the sugar phosphate cyclases superfamily. Dehydroquinate synthase family. The cofactor is NAD(+). Requires Co(2+) as cofactor. Zn(2+) serves as cofactor.

The protein resides in the cytoplasm. The catalysed reaction is 7-phospho-2-dehydro-3-deoxy-D-arabino-heptonate = 3-dehydroquinate + phosphate. The protein operates within metabolic intermediate biosynthesis; chorismate biosynthesis; chorismate from D-erythrose 4-phosphate and phosphoenolpyruvate: step 2/7. Its function is as follows. Catalyzes the conversion of 3-deoxy-D-arabino-heptulosonate 7-phosphate (DAHP) to dehydroquinate (DHQ). The protein is 3-dehydroquinate synthase of Clostridium acetobutylicum (strain ATCC 824 / DSM 792 / JCM 1419 / IAM 19013 / LMG 5710 / NBRC 13948 / NRRL B-527 / VKM B-1787 / 2291 / W).